A 122-amino-acid chain; its full sequence is Large ribosomal subunit protein uL14 (122 aa).

This sequence belongs to the universal ribosomal protein uL14 family. As to quaternary structure, part of the 50S ribosomal subunit. Forms a cluster with proteins L3 and L19. In the 70S ribosome, L14 and L19 interact and together make contacts with the 16S rRNA in bridges B5 and B8.

Functionally, binds to 23S rRNA. Forms part of two intersubunit bridges in the 70S ribosome. The polypeptide is Large ribosomal subunit protein uL14 (Clostridium kluyveri (strain ATCC 8527 / DSM 555 / NBRC 12016 / NCIMB 10680 / K1)).